Consider the following 121-residue polypeptide: Large ribosomal subunit protein eL34A (121 aa).

It belongs to the eukaryotic ribosomal protein eL34 family. In terms of assembly, component of the large ribosomal subunit (LSU). Mature yeast ribosomes consist of a small (40S) and a large (60S) subunit. The 40S small subunit contains 1 molecule of ribosomal RNA (18S rRNA) and 33 different proteins (encoded by 57 genes). The large 60S subunit contains 3 rRNA molecules (25S, 5.8S and 5S rRNA) and 46 different proteins (encoded by 81 genes).

The protein resides in the cytoplasm. Functionally, component of the ribosome, a large ribonucleoprotein complex responsible for the synthesis of proteins in the cell. The small ribosomal subunit (SSU) binds messenger RNAs (mRNAs) and translates the encoded message by selecting cognate aminoacyl-transfer RNA (tRNA) molecules. The large subunit (LSU) contains the ribosomal catalytic site termed the peptidyl transferase center (PTC), which catalyzes the formation of peptide bonds, thereby polymerizing the amino acids delivered by tRNAs into a polypeptide chain. The nascent polypeptides leave the ribosome through a tunnel in the LSU and interact with protein factors that function in enzymatic processing, targeting, and the membrane insertion of nascent chains at the exit of the ribosomal tunnel. This Saccharomyces cerevisiae (strain ATCC 204508 / S288c) (Baker's yeast) protein is Large ribosomal subunit protein eL34A.